Reading from the N-terminus, the 140-residue chain is Phosphatidylinositol N-acetylglucosaminyltransferase subunit GPI19 (140 aa).

Residues 1-12 (MYTKEYYWFSQY) lie on the Cytoplasmic side of the membrane. Residues 13 to 33 (MIITSTLVLTIIWSILPSSLG) traverse the membrane as a helical segment. Residues 34 to 52 (EAAPKQFINTLLDIFPQRR) lie on the Lumenal side of the membrane. Residues 53 to 73 (WIITLESIMLMGMLCTYIGLL) form a helical membrane-spanning segment. Residues 74–140 (MYNEDTLTPP…YLYDNDHTST (67 aa)) lie on the Cytoplasmic side of the membrane.

It belongs to the GPI19 family. In terms of assembly, component of the phosphatidylinositol N-acetylglucosaminyltransferase (GPI-GlcNAc transferase) complex composed of at least GPI1, GPI2, GPI3, GPI15, GPI19 and ERI1. Interacts with GPI2.

It is found in the endoplasmic reticulum membrane. The enzyme catalyses a 1,2-diacyl-sn-glycero-3-phospho-(1D-myo-inositol) + UDP-N-acetyl-alpha-D-glucosamine = a 6-(N-acetyl-alpha-D-glucosaminyl)-1-(1,2-diacyl-sn-glycero-3-phospho)-1D-myo-inositol + UDP + H(+). It participates in glycolipid biosynthesis; glycosylphosphatidylinositol-anchor biosynthesis. In terms of biological role, part of the complex catalyzing the transfer of N-acetylglucosamine from UDP-N-acetylglucosamine to phosphatidylinositol, the first step of GPI biosynthesis. Involved in cell wall biosynthesis. This is Phosphatidylinositol N-acetylglucosaminyltransferase subunit GPI19 (GPI19) from Saccharomyces cerevisiae (strain ATCC 204508 / S288c) (Baker's yeast).